The following is a 428-amino-acid chain: MDPSVTLWQFLLQLLREQGNGHIISWTSRDGGEFKLVDAEEVARLWGLRKNKTNMNYDKLSRALRYYYDKNIIRKVSGQKFVYKFVSYPEVAGCSTEDCPPQPEVSVTSTMPNVAPAAIHAAPGDTVSGKPGTPKGAGMAGPGGLARSSRNEYMRSGLYSTFTIQSLQPQPPPHPRPAVVLPSAAPAGAAAPPSGSRSTSPSPLEACLEAEEAGLPLQVILTPPEAPNLKSEELNVEPGLGRALPPEVKVEGPKEELEVAGERGFVPETTKAEPEVPPQEGVPARLPAVVMDTAGQAGGHAASSPEISQPQKGRKPRDLELPLSPSLLGGPGPERTPGSGSGSGLQAPGPALTPSLLPTHTLTPVLLTPSSLPPSIHFWSTLSPIAPRSPAKLSFQFPSSGSAQVHIPSISVDGLSTPVVLSPGPQKP.

The ETS DNA-binding region spans 5 to 86 (VTLWQFLLQL…SGQKFVYKFV (82 aa)). 3 disordered regions span residues 121-149 (AAPG…ARSS), 165-205 (QSLQ…SPLE), and 228-358 (NLKS…SLLP). Residues 177–205 (PAVVLPSAAPAGAAAPPSGSRSTSPSPLE) show a composition bias toward low complexity. Glycyl lysine isopeptide (Lys-Gly) (interchain with G-Cter in SUMO) cross-links involve residues Lys-230, Lys-249, and Lys-254. Over residues 248 to 261 (VKVEGPKEELEVAG) the composition is skewed to basic and acidic residues. Position 324 is a phosphoserine; by MAPK1 (Ser-324). Residues Thr-336, Thr-353, Thr-363, and Thr-368 each carry the phosphothreonine; by MAPK1 modification. Positions 349-399 (GPALTPSLLPTHTLTPVLLTPSSLPPSIHFWSTLSPIAPRSPAKLSFQFPS) are sufficient for interaction with MAD2L2. O-linked (GlcNAc) threonine glycosylation occurs at Thr-381. Ser-383 is subject to Phosphoserine; by MAPK1 and MAPK8. A Phosphoserine; by MAPK1 modification is found at Ser-389. Thr-417 bears the Phosphothreonine; by MAPK1 mark. Phosphoserine; by MAPK1 is present on Ser-422.

Belongs to the ETS family. In terms of assembly, interacts in its sumoylated form with PIAS2/PIASX which enhances its transcriptional activator activity. Interacts with MAD2L2; the interaction is direct and promotes phosphorylation by the kinases MAPK8 and/or MAPK9. Interacts with POU1F1. Sumoylation represses transcriptional activator activity as it results in recruitment of HDAC2 to target gene promoters which leads to decreased histone acetylation and reduced transactivator activity. It also regulates nuclear retention. In terms of processing, on mitogenic stimulation, phosphorylated on C-terminal serine and threonine residues by MAPK1. Ser-383 and Ser-389 are the preferred sites for MAPK1. In vitro, phosphorylation by MAPK1 potentiates ternary complex formation with the serum responses factors, SRE and SRF. Also phosphorylated on Ser-383 by MAPK8 and/or MAKP9. Phosphorylation leads to loss of sumoylation and restores transcriptional activator activity. Phosphorylated and activated by CAMK4, MAPK11, MAPK12 and MAPK14. Upon bFGF stimulus, phosphorylated by PAK1. Phosphorylated by PRP4K at Thr-417; phosphorylation activation ELK1 transcriptional activity. Lung and testis.

It is found in the nucleus. Transcription factor that binds to purine-rich DNA sequences. Forms a ternary complex with SRF and the ETS and SRF motifs of the serum response element (SRE) on the promoter region of immediate early genes such as FOS and IER2. Induces target gene transcription upon JNK and MAPK-signaling pathways stimulation. The polypeptide is ETS domain-containing protein Elk-1 (Homo sapiens (Human)).